The sequence spans 159 residues: Small ribosomal subunit protein uS13 (159 aa).

The segment at 136–159 (QRTRSTGRSGATVGVTRKKTQAKK) is disordered. Residues 138-149 (TRSTGRSGATVG) are compositionally biased toward low complexity.

This sequence belongs to the universal ribosomal protein uS13 family. In terms of assembly, part of the 30S ribosomal subunit. Forms a loose heterodimer with protein S19. Forms two bridges to the 50S subunit in the 70S ribosome.

Its function is as follows. Located at the top of the head of the 30S subunit, it contacts several helices of the 16S rRNA. In the 70S ribosome it contacts the 23S rRNA (bridge B1a) and protein L5 of the 50S subunit (bridge B1b), connecting the 2 subunits; these bridges are implicated in subunit movement. The sequence is that of Small ribosomal subunit protein uS13 from Methanothrix thermoacetophila (strain DSM 6194 / JCM 14653 / NBRC 101360 / PT) (Methanosaeta thermophila).